Here is a 319-residue protein sequence, read N- to C-terminus: Ribonucleoside-diphosphate reductase 2 subunit beta (319 aa).

Residues aspartate 67, glutamate 98, and histidine 101 each coordinate Fe cation. The active site involves tyrosine 105. 3 residues coordinate Fe cation: glutamate 158, glutamate 192, and histidine 195.

This sequence belongs to the ribonucleoside diphosphate reductase small chain family. In terms of assembly, tetramer of two alpha and two beta subunits. Requires Fe cation as cofactor.

The catalysed reaction is a 2'-deoxyribonucleoside 5'-diphosphate + [thioredoxin]-disulfide + H2O = a ribonucleoside 5'-diphosphate + [thioredoxin]-dithiol. Provides the precursors necessary for DNA synthesis. Catalyzes the biosynthesis of deoxyribonucleotides from the corresponding ribonucleotides. R2F contains the tyrosyl radical required for catalysis. The sequence is that of Ribonucleoside-diphosphate reductase 2 subunit beta (nrdF) from Salmonella typhimurium (strain LT2 / SGSC1412 / ATCC 700720).